The sequence spans 1952 residues: Protein ROS1A (1952 aa).

Disordered stretches follow at residues 72–157 (EVVG…CRSE), 693–778 (IIRP…ESTS), 1302–1334 (HGTS…DDNV), and 1367–1398 (LIEN…AGKK). Basic residues-rich tracts occupy residues 90–102 (PARK…HRPK) and 130–139 (GKRKYVRKKT). Composition is skewed to basic and acidic residues over residues 709 to 720 (PRTDNHQVKVSE) and 727 to 747 (LPEK…EKPK). Residues 769–778 (TNPLQNESTS) are compositionally biased toward polar residues. Over residues 1388-1398 (AKRPRVGAGKK) the composition is skewed to basic residues. [4Fe-4S] cluster is bound by residues C1582, C1589, C1592, and C1598.

The protein belongs to the DNA glycosylase family. DEMETER subfamily. It depends on [4Fe-4S] cluster as a cofactor. In terms of tissue distribution, expressed in roots, leaf blades, leaf sheaths, apical and lateral shoot meristems, inflorescence meristems, lodicules, pollen grains, ovules and seeds. Expressed in vascular tissues of roots and leaves, pollen grains, pericarp, aleurone, and starchy endosperm.

Its subcellular location is the nucleus. Its function is as follows. Bifunctional DNA glycosylase/lyase, which excises 5-methylcytosine (5-meC) and 5-hydroxymethylcytosine (5-hmeC), leaving an apyrimidinic (AP) site that is subsequently incised by the lyase activity. DNA demethylase that is indispensable in both male and female gametophyte development. Involved in the regulation of DNA methylation in the promoters of RISBZ1/BZIP58 and DOF3/RPBF, two transcription factors that functions synergistically to positively regulate genes that are key players in the development of aleurone layers. Active DNA demethylation carried out by ROS1A in rice endosperms may restrict the number of aleurone cell layers. The polypeptide is Protein ROS1A (Oryza sativa subsp. japonica (Rice)).